Consider the following 33-residue polypeptide: Tail virion protein G9P (33 aa).

Residues 5–25 form a helical membrane-spanning segment; sequence VGSFLGAYFLGFALFYGIGFF.

Belongs to the inovirus G9P protein family.

The protein resides in the virion. The protein localises to the host membrane. Its function is as follows. May initiate with G7P the virion concomitant assembly-budding process, by interacting with the packaging signal of the viral genome. The assembly-budding takes place at the host inner membrane. In turn, G7P and G9P are present at the end of the filamentous virion that emerges first from the bacterial host. This Salmonella phage IKe (Bacteriophage IKe) protein is Tail virion protein G9P (IX).